Consider the following 223-residue polypeptide: Phosphoglycolate phosphatase (223 aa).

The active-site Nucleophile is the D10. Positions 10 and 12 each coordinate Mg(2+). K149 serves as a coordination point for substrate. D172 and D176 together coordinate Mg(2+).

Belongs to the archaeal SPP-like hydrolase family. Mg(2+) is required as a cofactor.

The enzyme catalyses 2-phosphoglycolate + H2O = glycolate + phosphate. Catalyzes the dephosphorylation of 2-phosphoglycolate. This is Phosphoglycolate phosphatase from Archaeoglobus fulgidus (strain ATCC 49558 / DSM 4304 / JCM 9628 / NBRC 100126 / VC-16).